Reading from the N-terminus, the 255-residue chain is MNTKAVNLKSENTTKLVSYLTENQLDEFIRRIRIDGALVEEVSQNAKQALDNTGLNGWINTDCDEGLLSDFISKIASARWIPLAESIRPAVTDRDKYRVSCWFYQGMNIAIYANIGGVANIIGYTEAAVATLLGAVVAVAPVVPGTPTPPKDKSSQYKEVPLAVRLSETYHEEGVRGLFDELNYSESRMISTLRRASTDGVLINSWNDGQDTILLKKYNFQDLQLTVRSRIVGNQTIIEECKITDGRKTLSDETV.

2 consecutive propeptides follow at residues 1-101 (MNTK…RVSC) and 145-255 (GTPT…DETV).

It is found in the secreted. Functionally, bacteriocin with specific antibacterial activity against strains of P.freudenreichii. No antibacterial activity was detected against P.acidipropionici, P.jensenii and P.thoenii. This Propionibacterium freudenreichii subsp. freudenreichii protein is Propionicin-F.